The sequence spans 456 residues: Bifunctional protein GlmU (456 aa).

A pyrophosphorylase region spans residues 1–229; the sequence is MLNNAMSVVI…LSEVEGVNNR (229 aa). Residues 11–14, lysine 25, glutamine 76, 81–82, 103–105, glycine 140, glutamate 154, asparagine 169, and asparagine 227 contribute to the UDP-N-acetyl-alpha-D-glucosamine site; these read LAAG, GT, and YGD. Aspartate 105 is a Mg(2+) binding site. Residue asparagine 227 participates in Mg(2+) binding. Positions 230–250 are linker; sequence LQLSRLERVYQFEQAEKLLLA. The interval 251 to 456 is N-acetyltransferase; sequence GVMLRDPARF…EGWRRPVKKK (206 aa). Positions 333 and 351 each coordinate UDP-N-acetyl-alpha-D-glucosamine. Histidine 363 serves as the catalytic Proton acceptor. Residues tyrosine 366 and asparagine 377 each coordinate UDP-N-acetyl-alpha-D-glucosamine. Acetyl-CoA contacts are provided by residues alanine 380, 386–387, serine 405, alanine 423, and arginine 440; that span reads NY.

The protein in the N-terminal section; belongs to the N-acetylglucosamine-1-phosphate uridyltransferase family. This sequence in the C-terminal section; belongs to the transferase hexapeptide repeat family. As to quaternary structure, homotrimer. It depends on Mg(2+) as a cofactor.

Its subcellular location is the cytoplasm. It carries out the reaction alpha-D-glucosamine 1-phosphate + acetyl-CoA = N-acetyl-alpha-D-glucosamine 1-phosphate + CoA + H(+). The enzyme catalyses N-acetyl-alpha-D-glucosamine 1-phosphate + UTP + H(+) = UDP-N-acetyl-alpha-D-glucosamine + diphosphate. It functions in the pathway nucleotide-sugar biosynthesis; UDP-N-acetyl-alpha-D-glucosamine biosynthesis; N-acetyl-alpha-D-glucosamine 1-phosphate from alpha-D-glucosamine 6-phosphate (route II): step 2/2. The protein operates within nucleotide-sugar biosynthesis; UDP-N-acetyl-alpha-D-glucosamine biosynthesis; UDP-N-acetyl-alpha-D-glucosamine from N-acetyl-alpha-D-glucosamine 1-phosphate: step 1/1. Its pathway is bacterial outer membrane biogenesis; LPS lipid A biosynthesis. Its function is as follows. Catalyzes the last two sequential reactions in the de novo biosynthetic pathway for UDP-N-acetylglucosamine (UDP-GlcNAc). The C-terminal domain catalyzes the transfer of acetyl group from acetyl coenzyme A to glucosamine-1-phosphate (GlcN-1-P) to produce N-acetylglucosamine-1-phosphate (GlcNAc-1-P), which is converted into UDP-GlcNAc by the transfer of uridine 5-monophosphate (from uridine 5-triphosphate), a reaction catalyzed by the N-terminal domain. The protein is Bifunctional protein GlmU of Escherichia coli O7:K1 (strain IAI39 / ExPEC).